A 166-amino-acid polypeptide reads, in one-letter code: Endoribonuclease YbeY (166 aa).

3 residues coordinate Zn(2+): His129, His133, and His139.

This sequence belongs to the endoribonuclease YbeY family. It depends on Zn(2+) as a cofactor.

The protein resides in the cytoplasm. Functionally, single strand-specific metallo-endoribonuclease involved in late-stage 70S ribosome quality control and in maturation of the 3' terminus of the 16S rRNA. The sequence is that of Endoribonuclease YbeY from Heliobacterium modesticaldum (strain ATCC 51547 / Ice1).